The chain runs to 65 residues: Large ribosomal subunit protein bL35 (65 aa).

The protein belongs to the bacterial ribosomal protein bL35 family.

The protein is Large ribosomal subunit protein bL35 of Prochlorococcus marinus subsp. pastoris (strain CCMP1986 / NIES-2087 / MED4).